Here is a 450-residue protein sequence, read N- to C-terminus: Tubulin alpha chain (450 aa).

Glutamine 11 provides a ligand contact to GTP. N6-acetyllysine is present on lysine 40. GTP-binding residues include glutamate 71, serine 140, glycine 144, threonine 145, threonine 179, asparagine 206, and asparagine 228. Residue glutamate 71 coordinates Mg(2+). Glutamate 254 is a catalytic residue.

The protein belongs to the tubulin family. In terms of assembly, dimer of alpha and beta chains. A typical microtubule is a hollow water-filled tube with an outer diameter of 25 nm and an inner diameter of 15 nM. Alpha-beta heterodimers associate head-to-tail to form protofilaments running lengthwise along the microtubule wall with the beta-tubulin subunit facing the microtubule plus end conferring a structural polarity. Microtubules usually have 13 protofilaments but different protofilament numbers can be found in some organisms and specialized cells. Requires Mg(2+) as cofactor. In terms of processing, acetylation of alpha chains at Lys-40 stabilizes microtubules and affects affinity and processivity of microtubule motors. This modification has a role in multiple cellular functions, ranging from cell motility, cell cycle progression or cell differentiation to intracellular trafficking and signaling.

It localises to the cytoplasm. It is found in the cytoskeleton. The enzyme catalyses GTP + H2O = GDP + phosphate + H(+). Tubulin is the major constituent of microtubules, a cylinder consisting of laterally associated linear protofilaments composed of alpha- and beta-tubulin heterodimers. Microtubules grow by the addition of GTP-tubulin dimers to the microtubule end, where a stabilizing cap forms. Below the cap, tubulin dimers are in GDP-bound state, owing to GTPase activity of alpha-tubulin. The protein is Tubulin alpha chain of Euplotes vannus (Marine ciliate).